The chain runs to 185 residues: ATP synthase subunit b 2 (185 aa).

The disordered stretch occupies residues 1-25 (MAESHGNAHGATAHTEADGGHKAPF). Residues 34–56 (ASQLVSLTIAFVALYLISSRLAL) form a helical membrane-spanning segment.

The protein belongs to the ATPase B chain family. In terms of assembly, F-type ATPases have 2 components, F(1) - the catalytic core - and F(0) - the membrane proton channel. F(1) has five subunits: alpha(3), beta(3), gamma(1), delta(1), epsilon(1). F(0) has three main subunits: a(1), b(2) and c(10-14). The alpha and beta chains form an alternating ring which encloses part of the gamma chain. F(1) is attached to F(0) by a central stalk formed by the gamma and epsilon chains, while a peripheral stalk is formed by the delta and b chains.

The protein resides in the cell inner membrane. Functionally, f(1)F(0) ATP synthase produces ATP from ADP in the presence of a proton or sodium gradient. F-type ATPases consist of two structural domains, F(1) containing the extramembraneous catalytic core and F(0) containing the membrane proton channel, linked together by a central stalk and a peripheral stalk. During catalysis, ATP synthesis in the catalytic domain of F(1) is coupled via a rotary mechanism of the central stalk subunits to proton translocation. Its function is as follows. Component of the F(0) channel, it forms part of the peripheral stalk, linking F(1) to F(0). The b'-subunit is a diverged and duplicated form of b found in plants and photosynthetic bacteria. This Nitrobacter winogradskyi (strain ATCC 25391 / DSM 10237 / CIP 104748 / NCIMB 11846 / Nb-255) protein is ATP synthase subunit b 2 (atpF2).